We begin with the raw amino-acid sequence, 315 residues long: Methionyl-tRNA formyltransferase (315 aa).

113 to 116 contributes to the (6S)-5,6,7,8-tetrahydrofolate binding site; sequence SLLP.

Belongs to the Fmt family.

It carries out the reaction L-methionyl-tRNA(fMet) + (6R)-10-formyltetrahydrofolate = N-formyl-L-methionyl-tRNA(fMet) + (6S)-5,6,7,8-tetrahydrofolate + H(+). Functionally, attaches a formyl group to the free amino group of methionyl-tRNA(fMet). The formyl group appears to play a dual role in the initiator identity of N-formylmethionyl-tRNA by promoting its recognition by IF2 and preventing the misappropriation of this tRNA by the elongation apparatus. This is Methionyl-tRNA formyltransferase from Salmonella dublin (strain CT_02021853).